Reading from the N-terminus, the 334-residue chain is NmrA-like family domain-containing oxidoreductase lnaB (334 aa).

NADP(+)-binding positions include 12 to 17 (GGTGKQ), 38 to 42 (RNAQS), 59 to 60 (DG), 80 to 82 (INS), Lys138, and 162 to 165 (FLEN).

Belongs to the NmrA-type oxidoreductase family.

It functions in the pathway secondary metabolite biosynthesis. In terms of biological role, nmrA-like family domain-containing oxidoreductase; part of the lna gene cluster that mediates the biosynthesis of diastereomeric piperazines. Lna and lnb clusters encode sets of enzymes that produce overlapping sets of previously undescribed metabolites such as piperazinomycin-like metabolites or morpholine. The lna and lnb biosynthetic pathways appear to be part of a signaling network that controls the formation of sclerotia, a resilient overwintering structure. One primary function of the non-canonical nonribosomal peptide synthetases lnaA and lnbA consists in the reduction of L-tyrosine. The presence in the clusters of tailoring enzymes such as the oxidoreductases lnaB, lnbB, lnaE or lnbE, as well as of the cytochrome P450 monooxygenases lnaC, lnaD, or lnbC, might explain formation of various diastereomeric piperazines. This is NmrA-like family domain-containing oxidoreductase lnaB from Aspergillus flavus (strain ATCC 200026 / FGSC A1120 / IAM 13836 / NRRL 3357 / JCM 12722 / SRRC 167).